We begin with the raw amino-acid sequence, 522 residues long: Glucans biosynthesis protein G (522 aa).

The N-terminal stretch at 1 to 33 (MLDNKFGFKQRVASLRWLSAAIMLSVSAVPAWA) is a signal peptide.

Belongs to the OpgD/OpgG family.

It localises to the periplasm. The protein operates within glycan metabolism; osmoregulated periplasmic glucan (OPG) biosynthesis. Its function is as follows. Involved in the biosynthesis of osmoregulated periplasmic glucans (OPGs). The chain is Glucans biosynthesis protein G from Pectobacterium carotovorum subsp. carotovorum (strain PC1).